The primary structure comprises 98 residues: Aspartyl/glutamyl-tRNA(Asn/Gln) amidotransferase subunit C (98 aa).

It belongs to the GatC family. Heterotrimer of A, B and C subunits.

It carries out the reaction L-glutamyl-tRNA(Gln) + L-glutamine + ATP + H2O = L-glutaminyl-tRNA(Gln) + L-glutamate + ADP + phosphate + H(+). The catalysed reaction is L-aspartyl-tRNA(Asn) + L-glutamine + ATP + H2O = L-asparaginyl-tRNA(Asn) + L-glutamate + ADP + phosphate + 2 H(+). In terms of biological role, allows the formation of correctly charged Asn-tRNA(Asn) or Gln-tRNA(Gln) through the transamidation of misacylated Asp-tRNA(Asn) or Glu-tRNA(Gln) in organisms which lack either or both of asparaginyl-tRNA or glutaminyl-tRNA synthetases. The reaction takes place in the presence of glutamine and ATP through an activated phospho-Asp-tRNA(Asn) or phospho-Glu-tRNA(Gln). The chain is Aspartyl/glutamyl-tRNA(Asn/Gln) amidotransferase subunit C from Beutenbergia cavernae (strain ATCC BAA-8 / DSM 12333 / CCUG 43141 / JCM 11478 / NBRC 16432 / NCIMB 13614 / HKI 0122).